Consider the following 84-residue polypeptide: Small ribosomal subunit protein uS17 (84 aa).

It belongs to the universal ribosomal protein uS17 family. In terms of assembly, part of the 30S ribosomal subunit.

Its function is as follows. One of the primary rRNA binding proteins, it binds specifically to the 5'-end of 16S ribosomal RNA. The protein is Small ribosomal subunit protein uS17 of Clostridium botulinum (strain 657 / Type Ba4).